The following is a 185-amino-acid chain: Elongation factor P (185 aa).

This sequence belongs to the elongation factor P family.

It localises to the cytoplasm. The protein operates within protein biosynthesis; polypeptide chain elongation. Its function is as follows. Involved in peptide bond synthesis. Stimulates efficient translation and peptide-bond synthesis on native or reconstituted 70S ribosomes in vitro. Probably functions indirectly by altering the affinity of the ribosome for aminoacyl-tRNA, thus increasing their reactivity as acceptors for peptidyl transferase. In Streptococcus equi subsp. zooepidemicus (strain MGCS10565), this protein is Elongation factor P.